Here is a 291-residue protein sequence, read N- to C-terminus: HTH-type transcriptional activator AmpR (291 aa).

One can recognise an HTH lysR-type domain in the interval 6–63 (IPLNSLRAFEAAARHLSFTRAAIELNVTHSAISQHVKSLEQQLNCQLFVRGSRGLMLT). Positions 23–42 (FTRAAIELNVTHSAISQHVK) form a DNA-binding region, H-T-H motif.

Belongs to the LysR transcriptional regulatory family.

Its subcellular location is the cytoplasm. Functionally, regulates the expression of the beta-lactamase gene. Represses cephalosporinase (AmpC) in the presence of beta-lactams and induces it in the absence of them. The protein is HTH-type transcriptional activator AmpR (ampR) of Citrobacter freundii.